The sequence spans 75 residues: Transcription attenuation protein MtrB (75 aa).

This sequence belongs to the MtrB family. In terms of assembly, oligomer of 11 identical subunits arranged in doughnut-like structure.

Its function is as follows. Required for transcription attenuation control in the trp operon. This trans-acting factor binds to trinucleotide repeats (GAG or UAG) located in the trp leader transcript causing transcription termination. Binds the leader RNA only in presence of L-tryptophan. The sequence is that of Transcription attenuation protein MtrB (mtrB) from Bacillus subtilis (strain 168).